Consider the following 41-residue polypeptide: Large ribosomal subunit protein bL36 (41 aa).

The protein belongs to the bacterial ribosomal protein bL36 family.

This chain is Large ribosomal subunit protein bL36, found in Maricaulis maris (strain MCS10) (Caulobacter maris).